Here is a 243-residue protein sequence, read N- to C-terminus: Small ribosomal subunit protein uS3 (243 aa).

Positions 39–110 constitute a KH type-2 domain; sequence IRTFIQKKYG…QVRINVVEVE (72 aa). A disordered region spans residues 216 to 243; it reads QTIPVGASPKRKASRRPQQFEDRSNENS. A compositionally biased stretch (basic and acidic residues) spans 233–243; that stretch reads QQFEDRSNENS.

This sequence belongs to the universal ribosomal protein uS3 family. As to quaternary structure, part of the 30S ribosomal subunit. Forms a tight complex with proteins S10 and S14.

Its function is as follows. Binds the lower part of the 30S subunit head. Binds mRNA in the 70S ribosome, positioning it for translation. In Prochlorococcus marinus (strain AS9601), this protein is Small ribosomal subunit protein uS3.